The sequence spans 157 residues: SsrA-binding protein (157 aa).

The tract at residues 133–157 is disordered; that stretch reads LHDKRETEKKRDWSREKSRLLRARG. Over residues 135 to 151 the composition is skewed to basic and acidic residues; that stretch reads DKRETEKKRDWSREKSR.

It belongs to the SmpB family.

It is found in the cytoplasm. Functionally, required for rescue of stalled ribosomes mediated by trans-translation. Binds to transfer-messenger RNA (tmRNA), required for stable association of tmRNA with ribosomes. tmRNA and SmpB together mimic tRNA shape, replacing the anticodon stem-loop with SmpB. tmRNA is encoded by the ssrA gene; the 2 termini fold to resemble tRNA(Ala) and it encodes a 'tag peptide', a short internal open reading frame. During trans-translation Ala-aminoacylated tmRNA acts like a tRNA, entering the A-site of stalled ribosomes, displacing the stalled mRNA. The ribosome then switches to translate the ORF on the tmRNA; the nascent peptide is terminated with the 'tag peptide' encoded by the tmRNA and targeted for degradation. The ribosome is freed to recommence translation, which seems to be the essential function of trans-translation. This is SsrA-binding protein from Afipia carboxidovorans (strain ATCC 49405 / DSM 1227 / KCTC 32145 / OM5) (Oligotropha carboxidovorans).